We begin with the raw amino-acid sequence, 940 residues long: Receptor-like protein 9b (940 aa).

The signal sequence occupies residues 1–28 (MLMMFSPAFVMVMDLMVLVMMIMMMVSS). The Extracellular segment spans residues 29-895 (LDAHGHISCI…GDEETTIDME (867 aa)). 6 N-linked (GlcNAc...) asparagine glycosylation sites follow: N53, N63, N66, N101, N115, and N151. LRR repeat units follow at residues 108 to 136 (FGEL…SFER), 137 to 163 (LKNL…TASS), 165 to 185 (KTLI…ELIN), 186 to 211 (LRNL…NFHN), 213 to 232 (QGLD…LCQL), 233 to 255 (KNLR…CFDS), 257 to 279 (TQLQ…LIRN), 281 to 304 (DSVE…LIAN), 306 to 330 (SKLK…SLQP), 331 to 354 (KFQL…IQHQ), 355 to 378 (KDLH…LLEK), 379 to 402 (YPNL…RLLN), 403 to 426 (HTLQ…IGKV), 427 to 450 (LPNI…SFGE), 452 to 475 (KDIK…FLIG), and 477 to 502 (SSLH…NFGS). 2 N-linked (GlcNAc...) asparagine glycosylation sites follow: N270 and N304. N361, N389, and N402 each carry an N-linked (GlcNAc...) asparagine glycan. N-linked (GlcNAc...) asparagine glycosylation is found at N434 and N463. One copy of the LRR 17; degenerate repeat lies at 503–522 (LVVLIANNNLFTGIADGLRN). 11 LRR repeats span residues 523-546 (VQSL…WFGG), 547-570 (FFFA…LFSK), 571-593 (PTFK…HFTG), 595-615 (DMSL…STLI), 616-639 (KDVL…VKNE), 641-662 (ILSL…LCGL), 663-686 (RSIR…LNNV), 752-776 (FNFM…LGDL), 777-799 (QRIR…SFSN), 801-824 (TDIE…LSKL), and 826-849 (YMVV…KFST). N-linked (GlcNAc...) asparagine glycosylation occurs at N685. N-linked (GlcNAc...) asparagine glycosylation is found at N783 and N799. N831, N836, N867, and N873 each carry an N-linked (GlcNAc...) asparagine glycan. Residues 896–916 (IFYWSLAATYGVTWITFIVFL) traverse the membrane as a helical segment. Topologically, residues 917-940 (CFDSPWRRVWFHFVDAFISLFKCV) are cytoplasmic.

Belongs to the RLP family.

It localises to the cell membrane. In Arabidopsis thaliana (Mouse-ear cress), this protein is Receptor-like protein 9b.